A 318-amino-acid chain; its full sequence is Ficolin-1-B (318 aa).

The N-terminal stretch at 1-19 (MTRWVQTFLLLVAVIRSYA) is a signal peptide. The region spanning 42-99 (GCPGIPGVPGPQGPSGPAGAKGEKGFPGIPGKMGPTGLKGERGISGPKGQKGDKGDPG) is the Collagen-like domain. Residues 100–318 (IPVVGMAQNC…VSEIKFRPQP (219 aa)) enclose the Fibrinogen C-terminal domain. An intrachain disulfide couples C109 to C137. N-linked (GlcNAc...) asparagine glycans are attached at residues N205 and N222. D253 contributes to the Ca(2+) binding site. The N-linked (GlcNAc...) asparagine glycan is linked to N254. 2 residues coordinate Ca(2+): D255 and S257. An intrachain disulfide couples C261 to C274. Residue 273-275 (SCH) participates in a carbohydrate binding. N287 carries N-linked (GlcNAc...) asparagine glycosylation.

This sequence belongs to the ficolin lectin family. As to quaternary structure, homotrimer. May form higher-order oligomers. Post-translationally, N-glycosylated. Expressed in peripheral blood leukocytes. Also detected at lower levels in spleen and lung.

It is found in the secreted. In terms of biological role, may function in innate immunity through activation of the lectin complement pathway. Binds to GalNAc and GlcNAc carbohydrate moieties. The sequence is that of Ficolin-1-B from Xenopus laevis (African clawed frog).